The sequence spans 209 residues: Thiamine-phosphate synthase (209 aa).

4-amino-2-methyl-5-(diphosphooxymethyl)pyrimidine is bound by residues 37-41 and asparagine 69; that span reads QYRDK. Residues aspartate 70 and aspartate 89 each contribute to the Mg(2+) site. Serine 108 serves as a coordination point for 4-amino-2-methyl-5-(diphosphooxymethyl)pyrimidine. 135-137 contacts 2-[(2R,5Z)-2-carboxy-4-methylthiazol-5(2H)-ylidene]ethyl phosphate; that stretch reads SPT. Lysine 138 is a 4-amino-2-methyl-5-(diphosphooxymethyl)pyrimidine binding site. 2-[(2R,5Z)-2-carboxy-4-methylthiazol-5(2H)-ylidene]ethyl phosphate contacts are provided by residues glycine 165 and 185 to 186; that span reads VS.

The protein belongs to the thiamine-phosphate synthase family. It depends on Mg(2+) as a cofactor.

The enzyme catalyses 2-[(2R,5Z)-2-carboxy-4-methylthiazol-5(2H)-ylidene]ethyl phosphate + 4-amino-2-methyl-5-(diphosphooxymethyl)pyrimidine + 2 H(+) = thiamine phosphate + CO2 + diphosphate. It carries out the reaction 2-(2-carboxy-4-methylthiazol-5-yl)ethyl phosphate + 4-amino-2-methyl-5-(diphosphooxymethyl)pyrimidine + 2 H(+) = thiamine phosphate + CO2 + diphosphate. The catalysed reaction is 4-methyl-5-(2-phosphooxyethyl)-thiazole + 4-amino-2-methyl-5-(diphosphooxymethyl)pyrimidine + H(+) = thiamine phosphate + diphosphate. It participates in cofactor biosynthesis; thiamine diphosphate biosynthesis; thiamine phosphate from 4-amino-2-methyl-5-diphosphomethylpyrimidine and 4-methyl-5-(2-phosphoethyl)-thiazole: step 1/1. Condenses 4-methyl-5-(beta-hydroxyethyl)thiazole monophosphate (THZ-P) and 2-methyl-4-amino-5-hydroxymethyl pyrimidine pyrophosphate (HMP-PP) to form thiamine monophosphate (TMP). The sequence is that of Thiamine-phosphate synthase from Halorhodospira halophila (strain DSM 244 / SL1) (Ectothiorhodospira halophila (strain DSM 244 / SL1)).